Here is a 192-residue protein sequence, read N- to C-terminus: E3 ubiquitin-protein ligase RNF185 (192 aa).

Residues 1 to 14 (MASKGPSASASTEN) show a composition bias toward polar residues. A disordered region spans residues 1–30 (MASKGPSASASTENSSAGGPSGSSNGTGES). At 1 to 130 (MASKGPSASA…GGFQGFGFGD (130 aa)) the chain is on the cytoplasmic side. The segment covering 15–27 (SSAGGPSGSSNGT) has biased composition (low complexity). Residues 29–80 (ESGGQDSTFECNICLDTAKDAVISLCGHLFCWPCLHQWLETRPNRQVCPVCK) are required for ubiquitin ligase activity and protection against ER stress-induced cell death. The segment at 39–80 (CNICLDTAKDAVISLCGHLFCWPCLHQWLETRPNRQVCPVCK) adopts an RING-type zinc-finger fold. The tract at residues 90–123 (PLYGRGSTGQQDPREKTPPRPQGQRPEPENRGGF) is disordered. A helical transmembrane segment spans residues 131–151 (GGFQMSFGIGAFPFGIFATAF). Over 152–171 (NINDGRPPPAVPGTPQYVDE) the chain is Mitochondrial intermembrane. The helical transmembrane segment at 172–192 (QFLSRLFLFVALVIMFWLLIA) threads the bilayer.

In terms of assembly, interacts with ATG5 and BNIP1.

It localises to the mitochondrion outer membrane. It is found in the endoplasmic reticulum membrane. It catalyses the reaction S-ubiquitinyl-[E2 ubiquitin-conjugating enzyme]-L-cysteine + [acceptor protein]-L-lysine = [E2 ubiquitin-conjugating enzyme]-L-cysteine + N(6)-ubiquitinyl-[acceptor protein]-L-lysine.. Its pathway is protein modification; protein ubiquitination. Its function is as follows. E3 ubiquitin-protein ligase that regulates selective mitochondrial autophagy by mediating 'Lys-63'-linked polyubiquitination of BNIP1. Acts in the endoplasmic reticulum (ER)-associated degradation (ERAD) pathway, which targets misfolded proteins that accumulate in the endoplasmic reticulum (ER) for ubiquitination and subsequent proteasome-mediated degradation. Protects cells from ER stress-induced apoptosis. Responsible for the cotranslational ubiquitination and degradation of CFTR in the ERAD pathway. Also acts as a regulator of the innate antiviral response by catalyzing 'Lys-27'-linked polyubiquitination of CGAS, thereby promoting CGAS cyclic GMP-AMP synthase activity. Preferentially associates with the E2 enzymes UBE2J1 and UBE2J2. The sequence is that of E3 ubiquitin-protein ligase RNF185 (Rnf185) from Rattus norvegicus (Rat).